The sequence spans 689 residues: uncharacterized protein (689 aa).

4 disordered regions span residues 121–206 (LALK…VDPS), 286–305 (ASSN…PMDN), 322–414 (NSYS…SMAH), and 552–611 (AAMP…HLSD). The span at 133–158 (SPNNSIPLMANSCLLSADNSSSSTTS) shows a compositional bias: low complexity. Positions 322–380 (NSYSYDRYTPNQPSYLESKPGNHQPSYTSEQPMYSTASVPQQISNGPTAVNGLPMNSYT) are enriched in polar residues. Composition is skewed to low complexity over residues 381–411 (PHSN…SSPS) and 560–572 (PSAH…PSPH).

The protein resides in the cytoplasm. This is an uncharacterized protein from Schizosaccharomyces pombe (strain 972 / ATCC 24843) (Fission yeast).